The chain runs to 328 residues: GATA transcription factor 17 (328 aa).

The tract at residues 1–68 is disordered; it reads MSGHHEAKPY…EEYEGGEGVP (68 aa). Low complexity predominate over residues 14–29; the sequence is RGPAPADEEAAPAAAA. Acidic residues-rich tracts occupy residues 30-39 and 47-63; these read DEAEAEAEVE and EQEY…EYEG. Residues 100–135 form the Tify domain; the sequence is PHVASNTLTLSFQGEVYVFESVSAERVQAVLLLLGG. Residues 161–203 enclose the CCT domain; the sequence is RMASLMRFREKRKERNFDKKIRYTVRKEVALRMQRNRGQFTSS. A disordered region spans residues 198-231; the sequence is GQFTSSKSKAEEATSVITSSEGSPNWGAVEGRPP. The GATA-type zinc finger occupies 236 to 263; that stretch reads CHHCGISAASTPMMRRGPDGPRTLCNAC.

The protein belongs to the type IV zinc-finger family. Class C subfamily.

The protein resides in the nucleus. In terms of biological role, transcriptional activator that specifically binds 5'-GATA-3' or 5'-GAT-3' motifs within gene promoters. This Oryza sativa subsp. japonica (Rice) protein is GATA transcription factor 17.